Here is a 211-residue protein sequence, read N- to C-terminus: Ras-related protein Rab-38 (211 aa).

GTP-binding residues include Gly19, Val20, Gly21, Lys22, Thr23, Ser24, Ser35, Ser36, Tyr38, and Thr41. Thr23 is a binding site for Mg(2+). The Switch 1 motif lies at 32-46 (QNFSSHYRATIGVDF). Residues Thr41 and Asp65 each coordinate Mg(2+). GTP is bound by residues Gly68, Lys128, Asp130, Ala160, and Lys161. The short motif at 68 to 81 (GQERFGNMTRVYYR) is the Switch 2 element. Cys205 carries S-palmitoyl cysteine lipidation. The S-geranylgeranyl cysteine moiety is linked to residue Cys208.

This sequence belongs to the small GTPase superfamily. Rab family. In terms of assembly, interacts with ANKRD27. Mg(2+) serves as cofactor. Post-translationally, although at least one in vitro system can process and methylate the prenylated C-terminal, in an in vitro system that normally express Rab-38 and in vivo the prenylated C-terminal is not proteolytically processed and not methylated. Expressed in melanocytes.

It is found in the cell membrane. Its subcellular location is the melanosome. The protein resides in the cytoplasmic vesicle. The protein localises to the phagosome. It localises to the phagosome membrane. It is found in the melanosome membrane. The catalysed reaction is GTP + H2O = GDP + phosphate + H(+). Its activity is regulated as follows. Regulated by guanine nucleotide exchange factors (GEFs) including the BLOC-3 complex composed of HPS1 and HPS4 which promote the exchange of bound GDP for free GTP. Regulated by GTPase activating proteins (GAPs) including SGSM2 which increase the GTP hydrolysis activity. Inhibited by GDP dissociation inhibitors (GDIs). Its function is as follows. The small GTPases Rab are key regulators of intracellular membrane trafficking, from the formation of transport vesicles to their fusion with membranes. Rabs cycle between an inactive GDP-bound form and an active GTP-bound form that is able to recruit to membranes different sets of downstream effectors directly responsible for vesicle formation, movement, tethering and fusion. RAB38 may be involved in melanosomal transport and docking. Involved in the proper sorting of TYRP1. Involved in peripheral melanosomal distribution of TYRP1 in melanocytes; the function, which probably is implicating vesicle-trafficking, includes cooperation with ANKRD27 and VAMP7. Plays a role in the maturation of phagosomes that engulf pathogens, such as S.aureus and M.tuberculosis. Plays an important role in the control of melanin production and melanosome biogenesis. In concert with RAB32, regulates the proper trafficking of melanogenic enzymes TYR, TYRP1 and DCT/TYRP2 to melanosomes in melanocytes. In Homo sapiens (Human), this protein is Ras-related protein Rab-38.